The primary structure comprises 942 residues: Mitogen-activated protein kinase kinase kinase 14 (942 aa).

Positions 136–152 (GKRHGKARKKRRKKRSK) are enriched in basic residues. 2 disordered regions span residues 136 to 156 (GKRH…SLAQ) and 291 to 326 (VSGQ…SCPS). The region spanning 402-657 (MTHQPRVGRG…ELRRKVGKAL (256 aa)) is the Protein kinase domain. Positions 403 to 655 (THQPRVGRGS…AMELRRKVGK (253 aa)) are interaction with ZFP91. ATP is bound by residues 408–416 (VGRGSFGEV) and lysine 431. Aspartate 517 functions as the Proton acceptor in the catalytic mechanism. Threonine 561 carries the post-translational modification Phosphothreonine. Disordered stretches follow at residues 660–756 (VGGL…FPDR) and 801–823 (SDDS…SSGV). Positions 707 to 720 (EPQPPLPPEPPEPS) are enriched in pro residues. A compositionally biased stretch (polar residues) spans 809 to 823 (SKASQSSRDTLSSGV).

Belongs to the protein kinase superfamily. STE Ser/Thr protein kinase family. MAP kinase kinase kinase subfamily. Interacts with TRAF2, TRAF3, TRAF5, TRAF6, IKKA and NF-kappa-B2/P100. Interacts with PELI3. Interacts with NIBP; the interaction is direct. Interacts with ARRB1 and ARRB2. Interacts with GRB10. Interacts with ZFP91. Interacts with NLRP12; this interaction promotes proteasomal degradation of MAP3K14. Directly interacts with DDX3X. Interacts (via C-terminus and kinase domain) with PPPC3A (via N-terminus) and PPP3CB. Phosphorylation at Thr-561 is required to activate its kinase activity and 'Lys-63'-linked polyubiquitination. Phosphorylated by CHUK/IKKA leading to MAP3K14 destabilization. Autophosphorylated. Post-translationally, ubiquitinated. Undergoes both 'Lys-48'- and 'Lys-63'-linked polyubiquitination. 'Lys-48'-linked polyubiquitination leads to its degradation by the proteasome, while 'Lys-63'-linked polyubiquitination stabilizes and activates it.

The protein localises to the cytoplasm. It catalyses the reaction L-seryl-[protein] + ATP = O-phospho-L-seryl-[protein] + ADP + H(+). The enzyme catalyses L-threonyl-[protein] + ATP = O-phospho-L-threonyl-[protein] + ADP + H(+). Functionally, lymphotoxin beta-activated kinase which seems to be exclusively involved in the activation of NF-kappa-B and its transcriptional activity. Phosphorylates CHUK/IKKA. Promotes proteolytic processing of NFKB2/P100, which leads to activation of NF-kappa-B via the non-canonical pathway. Has an essential role in the non-canonical NF-kappa-B signalining that regulates genes encoding molecules involved in B-cell survival, lymphoid organogenesis, and immune response. Could act in a receptor-selective manner. This chain is Mitogen-activated protein kinase kinase kinase 14, found in Mus musculus (Mouse).